The following is a 532-amino-acid chain: MVDLQPDEVAAVLKQQLAHLKTDTELEEVGTVLQVGDGVAHIYGLTKIQAGELVEFENGKKAIALNLEENSVGAVIFGDAEGIGEGSTAKRTKRIASIHVGEGMIGRVVNTLGEPIDGKGPIKGELYEMPLERKAPGVLYRQPVAEPLQTGIKAIDAMIPIGRGQRELIIGDRQTGKTTLAIDTILNQRTYFEQGNPVYCIYVAIGQKASTIASVMASLEKYGAMEYTTIVAAPAATAASLQYFAPFTGATIGEYFRDTGKPALVIYDDLSKQAVAYREVSLLLRRPPGREAYPGDVFYLHSRLLERAAKINANDDIAQQMNDLPPSLEGKVKGGGSLTALPIIETQNGDVSAYIPTNVISITDGQIFLESALFNAGIRPAINVGISVSRVGGAAQVKAMKKVAGTLKLDQAQFRELEAFSKFGSDLDVATQRTIDRGRKNQEILKQGLHHPLTLEEQVCILYASTNGYLDKISLSQVTEFEKSYLSLLKSQHKGVLAKIAAGEWSDGIAQVLAEEAKNLAQLYVNDTSINS.

171–178 (GDRQTGKT) is an ATP binding site.

It belongs to the ATPase alpha/beta chains family. As to quaternary structure, F-type ATPases have 2 components, CF(1) - the catalytic core - and CF(0) - the membrane proton channel. CF(1) has five subunits: alpha(3), beta(3), gamma(1), delta(1), epsilon(1). CF(0) has three main subunits: a(1), b(2) and c(9-12). The alpha and beta chains form an alternating ring which encloses part of the gamma chain. CF(1) is attached to CF(0) by a central stalk formed by the gamma and epsilon chains, while a peripheral stalk is formed by the delta and b chains.

The protein localises to the cell membrane. It carries out the reaction ATP + H2O + 4 H(+)(in) = ADP + phosphate + 5 H(+)(out). Its function is as follows. Produces ATP from ADP in the presence of a proton gradient across the membrane. The alpha chain is a regulatory subunit. This Amoebophilus asiaticus (strain 5a2) protein is ATP synthase subunit alpha.